Here is a 566-residue protein sequence, read N- to C-terminus: Serine/threonine-protein kinase PknE (566 aa).

At methionine 1–tryptophan 337 the chain is on the cytoplasmic side. Serine 7 bears the Phosphoserine; by autocatalysis mark. Threonine 11 carries the post-translational modification Phosphothreonine; by autocatalysis. One can recognise a Protein kinase domain in the interval tyrosine 16–leucine 275. Residues valine 22 to valine 30 and lysine 45 each bind ATP. Threonine 50 and threonine 59 each carry phosphothreonine; by autocatalysis. Aspartate 139 functions as the Proton acceptor in the catalytic mechanism. Threonine 170, threonine 175, and threonine 178 each carry phosphothreonine; by autocatalysis. The disordered stretch occupies residues proline 296–proline 330. Residues leucine 338–leucine 358 traverse the membrane as a helical segment. At alanine 359–glycine 566 the chain is on the extracellular side.

Belongs to the protein kinase superfamily. Ser/Thr protein kinase family. Post-translationally, autophosphorylated on serine and threonine residues. Dephosphorylated by PstP.

It is found in the cell membrane. The catalysed reaction is L-seryl-[protein] + ATP = O-phospho-L-seryl-[protein] + ADP + H(+). It catalyses the reaction L-threonyl-[protein] + ATP = O-phospho-L-threonyl-[protein] + ADP + H(+). The chain is Serine/threonine-protein kinase PknE (pknE) from Mycobacterium bovis (strain ATCC BAA-935 / AF2122/97).